We begin with the raw amino-acid sequence, 279 residues long: Osmoprotective compounds uptake permease protein GgtC (279 aa).

7 helical membrane passes run 7–27 (LLFL…LSFF), 58–78 (LWLV…AVLV), 90–110 (IIFL…KFVY), 120–140 (IGLL…WLVE), 146–166 (FALI…ILSA), 202–222 (LLVV…IVFV), and 247–267 (FGRG…VMIT). One can recognise an ABC transmembrane type-1 domain in the interval 53 to 270 (FRNNLLWLVL…IVPVMITNIR (218 aa)).

This sequence belongs to the binding-protein-dependent transport system permease family. The complex is composed of two ATP-binding proteins (GgtA), two transmembrane proteins (GgtC and GgtD) and a solute-binding protein (GgtB).

The protein resides in the cell membrane. Part of the ABC transporter complex GgtABCD involved in the uptake of the osmoprotective compounds glucosylglycerol (GG), sucrose and trehalose. Responsible for the translocation of the substrate across the membrane. The polypeptide is Osmoprotective compounds uptake permease protein GgtC (Synechocystis sp. (strain ATCC 27184 / PCC 6803 / Kazusa)).